Reading from the N-terminus, the 424-residue chain is Spore coat protein SP60 (424 aa).

An N-terminal signal peptide occupies residues 1 to 23; it reads MKILSLLVVGALCMGGKVYGEVN. 6 Follistatin-like domains span residues 52-74, 85-109, 117-139, 184-206, 215-234, and 299-322; these read DCST…RQCV, KCDN…ALCV, VCRT…ECCV, ICRL…ECCV, DLKC…SKCC, and RCDD…LSCE. Positions 330–424 are disordered; it reads RSLDWAENEN…FQDANDEWDY (95 aa). 2 stretches are compositionally biased toward acidic residues: residues 335 to 357 and 365 to 424; these read AENE…YDGD and YDGD…EWDY.

This is Spore coat protein SP60 (cotC) from Dictyostelium discoideum (Social amoeba).